We begin with the raw amino-acid sequence, 147 residues long: Hemoglobin subunit gamma (147 aa).

Residues 3–147 (HFTAEEKAII…VATALAHKYH (145 aa)) form the Globin domain. Residues histidine 64 and histidine 93 each coordinate heme b.

It belongs to the globin family. In terms of assembly, heterotetramer of two alpha chains and two gamma chains in fetal hemoglobin (Hb F). Red blood cells.

In terms of biological role, gamma chains make up the fetal hemoglobin F, in combination with alpha chains. This chain is Hemoglobin subunit gamma (HBG), found in Otolemur crassicaudatus (Brown greater galago).